A 131-amino-acid chain; its full sequence is Insulin-like 3 (131 aa).

The first 24 residues, 1–24 (MDPRLPAWALVLLGPALVFALGPA), serve as a signal peptide directing secretion. 3 disulfides stabilise this stretch: cysteine 34–cysteine 117, cysteine 46–cysteine 130, and cysteine 116–cysteine 121. Positions 58-104 (PVAAGDGELLQWLERRHLLYGLVANSEPAPGGPGLQPMPQTSHHHRH) are cleaved as a propeptide — c peptide like. Residues 86 to 105 (APGGPGLQPMPQTSHHHRHR) form a disordered region.

It belongs to the insulin family. In terms of assembly, heterodimer of a B chain and an A chain linked by two disulfide bonds. Highest expression in the Leydig cells of the testis.

It is found in the secreted. Seems to play a role in testicular function. May be a trophic hormone with a role in testicular descent in fetal life. Is a ligand for LGR8 receptor. The sequence is that of Insulin-like 3 (INSL3) from Callithrix jacchus (White-tufted-ear marmoset).